We begin with the raw amino-acid sequence, 306 residues long: Phospho-N-acetylmuramoyl-pentapeptide-transferase (306 aa).

Transmembrane regions (helical) follow at residues 1-21 (MDIY…IIFP), 49-69 (GTPT…GLIL), 75-95 (LIFT…VSIV), 104-124 (AWQK…TILQ), 130-150 (IFGI…LVSG), 160-180 (GIDG…MFFS), 182-202 (SSME…FLVY), 209-229 (VFMG…YALM), 234-254 (LSLL…ILQV), and 284-304 (IVGV…AFFL).

This sequence belongs to the glycosyltransferase 4 family. MraY subfamily. Mg(2+) is required as a cofactor.

It localises to the cell inner membrane. The enzyme catalyses UDP-N-acetyl-alpha-D-muramoyl-L-alanyl-gamma-D-glutamyl-meso-2,6-diaminopimeloyl-D-alanyl-D-alanine + di-trans,octa-cis-undecaprenyl phosphate = di-trans,octa-cis-undecaprenyl diphospho-N-acetyl-alpha-D-muramoyl-L-alanyl-D-glutamyl-meso-2,6-diaminopimeloyl-D-alanyl-D-alanine + UMP. Its pathway is cell wall biogenesis; peptidoglycan biosynthesis. Functionally, catalyzes the initial step of the lipid cycle reactions in the biosynthesis of the cell wall peptidoglycan: transfers peptidoglycan precursor phospho-MurNAc-pentapeptide from UDP-MurNAc-pentapeptide onto the lipid carrier undecaprenyl phosphate, yielding undecaprenyl-pyrophosphoryl-MurNAc-pentapeptide, known as lipid I. The protein is Phospho-N-acetylmuramoyl-pentapeptide-transferase of Fervidobacterium nodosum (strain ATCC 35602 / DSM 5306 / Rt17-B1).